The primary structure comprises 148 residues: Putative carbonic anhydrase (148 aa).

The Alpha-carbonic anhydrase domain occupies 1-146; that stretch reads CLKRLQPGEM…LNGRTVFEVH (146 aa).

It belongs to the alpha-carbonic anhydrase family. It depends on Zn(2+) as a cofactor. In terms of tissue distribution, component of the acid-insoluble organic matrix of the aragonitic skeleton (at protein level).

Its subcellular location is the secreted. It catalyses the reaction hydrogencarbonate + H(+) = CO2 + H2O. In terms of biological role, reversible hydration of carbon dioxide. This is Putative carbonic anhydrase from Acropora millepora (Staghorn coral).